A 273-amino-acid polypeptide reads, in one-letter code: Transmembrane epididymal protein 1 (273 aa).

A run of 6 helical transmembrane segments spans residues 34-54 (IVTGSLLTFYVVLCLDGGMVL), 72-92 (LTMFILLTLNGCVDFMSKNVL), 96-116 (CVGLEKGTLVLIIYELLLLMV), 129-149 (VYSLLILVVFLLLLVLTAELW), 158-178 (LMETFLILMMGSWLMQAGFIL), and 195-215 (IMFVTTFFCWHVMINASFLLG).

The protein belongs to the TMEM45 family.

The protein localises to the membrane. The protein is Transmembrane epididymal protein 1 (TEDDM1) of Homo sapiens (Human).